The primary structure comprises 232 residues: 7-cyano-7-deazaguanine synthase 1 (232 aa).

Position 7–17 (7–17 (CSGGLDSVSLA)) interacts with ATP. Cys185, Cys193, Cys196, and Cys199 together coordinate Zn(2+).

This sequence belongs to the QueC family. The cofactor is Zn(2+).

It carries out the reaction 7-carboxy-7-deazaguanine + NH4(+) + ATP = 7-cyano-7-deazaguanine + ADP + phosphate + H2O + H(+). It participates in purine metabolism; 7-cyano-7-deazaguanine biosynthesis. In terms of biological role, catalyzes the ATP-dependent conversion of 7-carboxy-7-deazaguanine (CDG) to 7-cyano-7-deazaguanine (preQ(0)). This is 7-cyano-7-deazaguanine synthase 1 from Mesorhizobium japonicum (strain LMG 29417 / CECT 9101 / MAFF 303099) (Mesorhizobium loti (strain MAFF 303099)).